Here is a 188-residue protein sequence, read N- to C-terminus: Elongation factor P (188 aa).

Belongs to the elongation factor P family.

Its subcellular location is the cytoplasm. Its pathway is protein biosynthesis; polypeptide chain elongation. Its function is as follows. Involved in peptide bond synthesis. Stimulates efficient translation and peptide-bond synthesis on native or reconstituted 70S ribosomes in vitro. Probably functions indirectly by altering the affinity of the ribosome for aminoacyl-tRNA, thus increasing their reactivity as acceptors for peptidyl transferase. This is Elongation factor P from Chlorobaculum parvum (strain DSM 263 / NCIMB 8327) (Chlorobium vibrioforme subsp. thiosulfatophilum).